Reading from the N-terminus, the 62-residue chain is uncharacterized protein (62 aa).

2 helical membrane-spanning segments follow: residues 7 to 27 (LLLL…VFIA) and 34 to 51 (IIAS…GFTL).

It localises to the cell membrane. This is an uncharacterized protein from Bacillus subtilis (strain 168).